Consider the following 205-residue polypeptide: Probable GTP-binding protein EngB (205 aa).

The region spanning 22 to 198 (HLPEYAFIGR…LSYIDEVNQD (177 aa)) is the EngB-type G domain. GTP is bound by residues 30–37 (GRSNVGKS), 57–61 (GKTQL), 75–78 (DLPG), 142–145 (TKAD), and 177–179 (TSA). Residues Ser-37 and Thr-59 each coordinate Mg(2+).

Belongs to the TRAFAC class TrmE-Era-EngA-EngB-Septin-like GTPase superfamily. EngB GTPase family. It depends on Mg(2+) as a cofactor.

In terms of biological role, necessary for normal cell division and for the maintenance of normal septation. The protein is Probable GTP-binding protein EngB of Flavobacterium psychrophilum (strain ATCC 49511 / DSM 21280 / CIP 103535 / JIP02/86).